Consider the following 327-residue polypeptide: Glycerol-3-phosphate dehydrogenase [NAD(P)+] (327 aa).

3 residues coordinate NADPH: Phe13, Arg34, and Lys107. 2 residues coordinate sn-glycerol 3-phosphate: Lys107 and Gly135. Residue Ala139 coordinates NADPH. Sn-glycerol 3-phosphate is bound by residues Lys190, Asp243, Ser253, Arg254, and Asn255. The active-site Proton acceptor is the Lys190. An NADPH-binding site is contributed by Arg254. NADPH is bound by residues Val276 and Glu277.

The protein belongs to the NAD-dependent glycerol-3-phosphate dehydrogenase family.

It localises to the cytoplasm. The catalysed reaction is sn-glycerol 3-phosphate + NAD(+) = dihydroxyacetone phosphate + NADH + H(+). It catalyses the reaction sn-glycerol 3-phosphate + NADP(+) = dihydroxyacetone phosphate + NADPH + H(+). It participates in membrane lipid metabolism; glycerophospholipid metabolism. In terms of biological role, catalyzes the reduction of the glycolytic intermediate dihydroxyacetone phosphate (DHAP) to sn-glycerol 3-phosphate (G3P), the key precursor for phospholipid synthesis. This Rhizobium etli (strain CIAT 652) protein is Glycerol-3-phosphate dehydrogenase [NAD(P)+].